The primary structure comprises 355 residues: DNA polymerase IV (355 aa).

The 185-residue stretch at 14-198 folds into the UmuC domain; it reads IIHVDMDAFF…LPVEKFHGVG (185 aa). Mg(2+) is bound by residues Asp18 and Asp116. Glu117 is an active-site residue.

It belongs to the DNA polymerase type-Y family. Monomer. Mg(2+) serves as cofactor.

It is found in the cytoplasm. It catalyses the reaction DNA(n) + a 2'-deoxyribonucleoside 5'-triphosphate = DNA(n+1) + diphosphate. Its function is as follows. Poorly processive, error-prone DNA polymerase involved in untargeted mutagenesis. Copies undamaged DNA at stalled replication forks, which arise in vivo from mismatched or misaligned primer ends. These misaligned primers can be extended by PolIV. Exhibits no 3'-5' exonuclease (proofreading) activity. May be involved in translesional synthesis, in conjunction with the beta clamp from PolIII. This Streptococcus suis (strain 98HAH33) protein is DNA polymerase IV.